Reading from the N-terminus, the 379-residue chain is Flap endonuclease 1 (379 aa).

Positions 1–105 (MGVKGLNQLI…GELEKRLLRR (105 aa)) are N-domain. Asp34 contacts Mg(2+). Residues Arg47 and Arg71 each coordinate DNA. Positions 87, 159, 161, 180, and 182 each coordinate Mg(2+). The segment at 123 to 254 (DMVRYEKRTV…VTAFKLIKEH (132 aa)) is I-domain. Glu159 contributes to the DNA binding site. Residues Gly232 and Asp234 each contribute to the DNA site. Residue Asp234 participates in Mg(2+) binding. An interaction with PCNA region spans residues 341 to 349 (VQGRLDGFF). The segment at 344 to 379 (RLDGFFQSVPKPKDSADKKRKNDTKSAKSKKAKTRK) is disordered. A compositionally biased stretch (basic residues) spans 361-379 (KKRKNDTKSAKSKKAKTRK).

This sequence belongs to the XPG/RAD2 endonuclease family. FEN1 subfamily. Interacts with PCNA. Three molecules of FEN1 bind to one PCNA trimer with each molecule binding to one PCNA monomer. PCNA stimulates the nuclease activity without altering cleavage specificity. It depends on Mg(2+) as a cofactor. Post-translationally, phosphorylated. Phosphorylation upon DNA damage induces relocalization to the nuclear plasma.

Its subcellular location is the nucleus. The protein localises to the nucleolus. It localises to the nucleoplasm. It is found in the mitochondrion. Its function is as follows. Structure-specific nuclease with 5'-flap endonuclease and 5'-3' exonuclease activities involved in DNA replication and repair. During DNA replication, cleaves the 5'-overhanging flap structure that is generated by displacement synthesis when DNA polymerase encounters the 5'-end of a downstream Okazaki fragment. It enters the flap from the 5'-end and then tracks to cleave the flap base, leaving a nick for ligation. Also involved in the long patch base excision repair (LP-BER) pathway, by cleaving within the apurinic/apyrimidinic (AP) site-terminated flap. Acts as a genome stabilization factor that prevents flaps from equilibrating into structures that lead to duplications and deletions. Also possesses 5'-3' exonuclease activity on nicked or gapped double-stranded DNA, and exhibits RNase H activity. Also involved in replication and repair of rDNA and in repairing mitochondrial DNA. This chain is Flap endonuclease 1, found in Debaryomyces hansenii (strain ATCC 36239 / CBS 767 / BCRC 21394 / JCM 1990 / NBRC 0083 / IGC 2968) (Yeast).